Reading from the N-terminus, the 229-residue chain is GTP cyclohydrolase 1 (229 aa).

The interval 1–26 (MDAKIKPIRGTNPAEGRPEFQPAELE) is disordered. Residues C118, H121, and C189 each coordinate Zn(2+).

Belongs to the GTP cyclohydrolase I family. In terms of assembly, toroid-shaped homodecamer, composed of two pentamers of five dimers.

It carries out the reaction GTP + H2O = 7,8-dihydroneopterin 3'-triphosphate + formate + H(+). It functions in the pathway cofactor biosynthesis; 7,8-dihydroneopterin triphosphate biosynthesis; 7,8-dihydroneopterin triphosphate from GTP: step 1/1. This chain is GTP cyclohydrolase 1, found in Rhodopseudomonas palustris (strain ATCC BAA-98 / CGA009).